The sequence spans 164 residues: MADMAENNRAVIKLREKFASSILEVKEFRGEVTVIVRKEDIVALCKFLKEELRYNLLTDVTAVDYLGKDPRFMVVYNIYSIPNKDRLRIKAPVTEGECTIDTVCGVWTTANWLEREAYDLMGIIFKNHPDLRRIMMTDDWVGHPLRKDYPLQGPDREPYKGRLS.

It belongs to the complex I 30 kDa subunit family. NDH-1 is composed of 14 different subunits. Subunits NuoB, C, D, E, F, and G constitute the peripheral sector of the complex.

The protein localises to the cell inner membrane. It catalyses the reaction a quinone + NADH + 5 H(+)(in) = a quinol + NAD(+) + 4 H(+)(out). Functionally, NDH-1 shuttles electrons from NADH, via FMN and iron-sulfur (Fe-S) centers, to quinones in the respiratory chain. The immediate electron acceptor for the enzyme in this species is believed to be ubiquinone. Couples the redox reaction to proton translocation (for every two electrons transferred, four hydrogen ions are translocated across the cytoplasmic membrane), and thus conserves the redox energy in a proton gradient. In Geotalea uraniireducens (strain Rf4) (Geobacter uraniireducens), this protein is NADH-quinone oxidoreductase subunit C.